A 757-amino-acid polypeptide reads, in one-letter code: Endonuclease MutS2 (757 aa).

321–328 (GPNMGGKT) lines the ATP pocket. Residues 681–756 (IDIRGMTVEE…GTGVTVVEVK (76 aa)) form the Smr domain.

Belongs to the DNA mismatch repair MutS family. MutS2 subfamily. Homodimer. Binds to stalled ribosomes, contacting rRNA.

In terms of biological role, endonuclease that is involved in the suppression of homologous recombination and thus may have a key role in the control of bacterial genetic diversity. Functionally, acts as a ribosome collision sensor, splitting the ribosome into its 2 subunits. Detects stalled/collided 70S ribosomes which it binds and splits by an ATP-hydrolysis driven conformational change. Acts upstream of the ribosome quality control system (RQC), a ribosome-associated complex that mediates the extraction of incompletely synthesized nascent chains from stalled ribosomes and their subsequent degradation. Probably generates substrates for RQC. The polypeptide is Endonuclease MutS2 (Thermotoga sp. (strain RQ2)).